A 231-amino-acid chain; its full sequence is Venom allergen 3 homolog (231 aa).

The N-terminal stretch at 1-21 (MSSCMLFFTVIIAGVFMGTIA) is a signal peptide. Cystine bridges form between cysteine 25–cysteine 40, cysteine 30–cysteine 124, and cysteine 51–cysteine 117. In terms of domain architecture, SCP spans 68 to 215 (VTLHNQLRRK…WNQQYLVCNY (148 aa)). N-linked (GlcNAc...) asparagine glycosylation is present at asparagine 145. Residues cysteine 196 and cysteine 213 are joined by a disulfide bond.

This sequence belongs to the CRISP family. In terms of tissue distribution, expressed by the venom gland.

The protein resides in the secreted. The chain is Venom allergen 3 homolog from Dinoponera quadriceps (South American ant).